Reading from the N-terminus, the 133-residue chain is Core atranone cluster (CAC) protein 11 (133 aa).

The protein operates within mycotoxin biosynthesis. In terms of biological role, part of the core atranone cluster (CAC) which products are predicted to catalyze most or all steps of mycotoxin atranone synthesis, starting from geranylgeranyl pyrophosphate (GGPP). The initial cyclization of GGPP to dolabellane is probably performed by the terpene cyclase ATR13. The Baeyer-Villiger oxidation near the end of the atranone synthesis, which converts atranones D and E to atranones F and G is predicted to be catalyzed by the monooxygenase ATR8. Of the CAC's other predicted gene products, the reducing PKS ATR6 might synthesize a polyketide chain. This polyketide is probably transferred onto the atranone backbone by the polyketide transferase ATR5. Other predicted CAC products include 4 oxygenases (ATR2, ATR3, ATR4, and ATR14), 3 short-chain reductases (ATR7, ATR9, and ATR10), and a methyltransferase (ATR12). These may all be involved in the various steps of atranone biosynthesis, although their specific roles must await experimental determination. The polypeptide is Core atranone cluster (CAC) protein 11 (Stachybotrys chlorohalonatus (strain IBT 40285)).